We begin with the raw amino-acid sequence, 120 residues long: Large ribosomal subunit protein uL18 (120 aa).

It belongs to the universal ribosomal protein uL18 family. As to quaternary structure, part of the 50S ribosomal subunit; part of the 5S rRNA/L5/L18/L25 subcomplex. Contacts the 5S and 23S rRNAs.

Functionally, this is one of the proteins that bind and probably mediate the attachment of the 5S RNA into the large ribosomal subunit, where it forms part of the central protuberance. The chain is Large ribosomal subunit protein uL18 from Beijerinckia indica subsp. indica (strain ATCC 9039 / DSM 1715 / NCIMB 8712).